The chain runs to 536 residues: Heat shock factor protein 2 (536 aa).

Residues K2 and K82 each participate in a glycyl lysine isopeptide (Lys-Gly) (interchain with G-Cter in SUMO2) cross-link. Residues 7–112 mediate DNA binding; sequence VPAFLSKLWT…LLENIKRKVS (106 aa). The Nuclear localization signal signature appears at 108–122; the sequence is KRKVSSSKPEENKIR. Residues 119–192 form a hydrophobic repeat HR-A/B region; sequence NKIRQEDLTK…VTLVQNNQLV (74 aa). Residues K135, K139, K151, K210, K218, and K237 each participate in a glycyl lysine isopeptide (Lys-Gly) (interchain with G-Cter in SUMO2) cross-link. Positions 195–210 match the Nuclear localization signal motif; sequence KRKRPLLLNTNGAQKK. Residues 300–337 form a disordered region; that stretch reads QSGEQNEPARESLSSGSDGSSPLMSSAVQLNGSSSLTS. Residues 311–325 are compositionally biased toward low complexity; it reads SLSSGSDGSSPLMSS. Over residues 326 to 337 the composition is skewed to polar residues; sequence AVQLNGSSSLTS. Residues 360 to 385 form a hydrophobic repeat HR-C region; it reads LLDYLDSIDCSLEDFQAMLSGRQFSI. Positions 407–438 are disordered; that stretch reads NNTKSENKGLETTKNNVVQPVSEEGRKSKSKP. Residues 429 to 438 are compositionally biased toward basic and acidic residues; sequence EEGRKSKSKP.

It belongs to the HSF family. DNA-binding homotrimer in stressed or heat shocked cells, otherwise found as a homodimer.

It is found in the cytoplasm. The protein resides in the nucleus. Its function is as follows. DNA-binding protein that specifically binds heat shock promoter elements (HSE) and activates transcription. In higher eukaryotes, HSF is unable to bind to the HSE unless the cells are heat shocked. The sequence is that of Heat shock factor protein 2 (HSF2) from Homo sapiens (Human).